The sequence spans 173 residues: Crossover junction endodeoxyribonuclease RuvC (173 aa).

Residues Asp8, Glu67, and Asp139 contribute to the active site. The Mg(2+) site is built by Asp8, Glu67, and Asp139.

This sequence belongs to the RuvC family. Homodimer which binds Holliday junction (HJ) DNA. The HJ becomes 2-fold symmetrical on binding to RuvC with unstacked arms; it has a different conformation from HJ DNA in complex with RuvA. In the full resolvosome a probable DNA-RuvA(4)-RuvB(12)-RuvC(2) complex forms which resolves the HJ. The cofactor is Mg(2+).

The protein localises to the cytoplasm. The enzyme catalyses Endonucleolytic cleavage at a junction such as a reciprocal single-stranded crossover between two homologous DNA duplexes (Holliday junction).. In terms of biological role, the RuvA-RuvB-RuvC complex processes Holliday junction (HJ) DNA during genetic recombination and DNA repair. Endonuclease that resolves HJ intermediates. Cleaves cruciform DNA by making single-stranded nicks across the HJ at symmetrical positions within the homologous arms, yielding a 5'-phosphate and a 3'-hydroxyl group; requires a central core of homology in the junction. The consensus cleavage sequence is 5'-(A/T)TT(C/G)-3'. Cleavage occurs on the 3'-side of the TT dinucleotide at the point of strand exchange. HJ branch migration catalyzed by RuvA-RuvB allows RuvC to scan DNA until it finds its consensus sequence, where it cleaves and resolves the cruciform DNA. The polypeptide is Crossover junction endodeoxyribonuclease RuvC (Aliivibrio fischeri (strain ATCC 700601 / ES114) (Vibrio fischeri)).